The following is a 546-amino-acid chain: Putative serine hydroxymethyltransferase, mitochondrial (546 aa).

Residues 1-64 constitute a mitochondrion transit peptide; that stretch reads MSSFQSTAAV…RFSSSSIAND (64 aa). At lysine 305 the chain carries N6-(pyridoxal phosphate)lysine.

It belongs to the SHMT family. In terms of assembly, homotetramer. Pyridoxal 5'-phosphate serves as cofactor.

Its subcellular location is the mitochondrion. It carries out the reaction (6R)-5,10-methylene-5,6,7,8-tetrahydrofolate + glycine + H2O = (6S)-5,6,7,8-tetrahydrofolate + L-serine. Its pathway is one-carbon metabolism; tetrahydrofolate interconversion. In terms of biological role, interconversion of serine and glycine. This is Putative serine hydroxymethyltransferase, mitochondrial (cbs-2) from Neurospora crassa (strain ATCC 24698 / 74-OR23-1A / CBS 708.71 / DSM 1257 / FGSC 987).